We begin with the raw amino-acid sequence, 349 residues long: Phosphoribosylformylglycinamidine cyclo-ligase (349 aa).

Belongs to the AIR synthase family.

It localises to the cytoplasm. It catalyses the reaction 2-formamido-N(1)-(5-O-phospho-beta-D-ribosyl)acetamidine + ATP = 5-amino-1-(5-phospho-beta-D-ribosyl)imidazole + ADP + phosphate + H(+). Its pathway is purine metabolism; IMP biosynthesis via de novo pathway; 5-amino-1-(5-phospho-D-ribosyl)imidazole from N(2)-formyl-N(1)-(5-phospho-D-ribosyl)glycinamide: step 2/2. The chain is Phosphoribosylformylglycinamidine cyclo-ligase from Lawsonia intracellularis (strain PHE/MN1-00).